The chain runs to 270 residues: Type III pantothenate kinase (270 aa).

16 to 23 (EIGNTTAM) is a binding site for ATP. Residues Tyr-106 and 113–116 (GADR) each bind substrate. Asp-115 acts as the Proton acceptor in catalysis. Asp-136 contacts K(+). Thr-139 serves as a coordination point for ATP. Thr-191 contacts substrate.

Belongs to the type III pantothenate kinase family. Homodimer. It depends on NH4(+) as a cofactor. Requires K(+) as cofactor.

It is found in the cytoplasm. The enzyme catalyses (R)-pantothenate + ATP = (R)-4'-phosphopantothenate + ADP + H(+). It functions in the pathway cofactor biosynthesis; coenzyme A biosynthesis; CoA from (R)-pantothenate: step 1/5. Catalyzes the phosphorylation of pantothenate (Pan), the first step in CoA biosynthesis. The chain is Type III pantothenate kinase from Chlorobium luteolum (strain DSM 273 / BCRC 81028 / 2530) (Pelodictyon luteolum).